The chain runs to 1909 residues: Endoribonuclease Dicer homolog 1 (1909 aa).

Residues 99–177 (TVKENGLQKN…NNKKKRECNN (79 aa)) are disordered. The segment covering 110 to 124 (GKRDEFSKEEGDKDR) has biased composition (basic and acidic residues). A compositionally biased stretch (polar residues) spans 131–146 (SYQSERSNLSGRGHVN). The span at 147–177 (NSREGDRFMNRKRTRNWDEAGNNKKKRECNN) shows a compositional bias: basic and acidic residues. One can recognise a Helicase ATP-binding domain in the interval 256-433 (VLEQAKAKNT…QVDCAIKIRN (178 aa)). 269–276 (LETGAGKT) contributes to the ATP binding site. A DECH box motif is present at residues 378 to 381 (DECH). One can recognise a Helicase C-terminal domain in the interval 651–812 (SLIKLLLKYQ…RTDLSHLKDT (162 aa)). In terms of domain architecture, Dicer dsRNA-binding fold spans 840–935 (AVGLVHFYCS…LPDKGSGQDA (96 aa)). A disordered region spans residues 929-952 (KGSGQDAEKADQDDEGEPVPGTAR). A PAZ domain is found at 1189–1318 (EVEEDLSKGK…LPPELCVVHP (130 aa)). RNase III domains are found at residues 1342-1518 (LAVQ…VEGG) and 1559-1707 (FVGL…LDSG). Residues Glu-1597, Asp-1693, and Glu-1696 each coordinate Mg(2+). 2 DRBM domains span residues 1733–1796 (HPVR…ALKE) and 1831–1906 (FTRQ…LLNK). Positions 1801–1831 (ESKEKHINNGNAGEDQGENENGNKKNGHQPF) are disordered.

Belongs to the helicase family. Dicer subfamily. As to quaternary structure, interacts (via N-terminus) with DDL. Interacts (via DRBM domains) with DRB1, DRB2 and DRB5. May interact with AGO1 or AGO10 through their common PAZ domains. Requires Mg(2+) as cofactor. Mn(2+) is required as a cofactor. As to expression, highly expressed in flowers and seeds and detected in leaves and stems. Found in ovule integuments, inflorescence and floral meristems, stigma of flowers until just before pollination, vasculature of the funiculus, and embryo.

The protein resides in the nucleus. Its function is as follows. Ribonuclease (RNase) III involved in RNA-mediated post-transcriptional gene silencing (PTGS). Functions in the microRNAs (miRNAs) biogenesis pathway by cleaving primary miRNAs (pri-miRNAs) and precursor miRNAs (pre-miRNAs). Functions with DRB1/HYL1 and SERRATE proteins for accurate pri-miRNAs to miRNAs processing. Indirectly involved in the production of trans-acting small interfering RNAs (ta-siRNAs) derived from the TAS1, TAS2 or TAS3 endogenous transcripts by participating in the production of their initiating miRNAs. Involved in the processing of natural siRNAs (nat-siRNAs, derived from cis-natural antisense transcripts) by cleaving 24 nucleotide nat-siRNAs into 21 nucleotide nat-siRNAs. Can produce RDR6-dependent endogenous ta-siRNAs derived from TAS1 and TAS2. Required for the production of 30-40 nucleotide bacterial-induced long siRNAs (lsiRNA). Acts redundantly with DICER-LIKE 3 (DCL3) to promote flowering via repression of FLOWERING LOCUS C (FLC). Represses antiviral RNA silencing through negative regulation of the expression of DCL4 and DCL3. This chain is Endoribonuclease Dicer homolog 1 (DCL1), found in Arabidopsis thaliana (Mouse-ear cress).